The following is a 353-amino-acid chain: Melanin-concentrating hormone receptor 1 (353 aa).

The disordered stretch occupies residues 1–26 (MDLQTSLLSTGPNASNISDGQDNLTL). Residues 1–45 (MDLQTSLLSTGPNASNISDGQDNLTLPGSPPRTGSVSYINIIMPS) lie on the Extracellular side of the membrane. Asparagine 13, asparagine 16, and asparagine 23 each carry an N-linked (GlcNAc...) asparagine glycan. The helical transmembrane segment at 46 to 66 (VFGTICLLGIVGNSTVIFAVV) threads the bilayer. At 67-79 (KKSKLHWCSNVPD) the chain is on the cytoplasmic side. A helical membrane pass occupies residues 80–100 (IFIINLSVVDLLFLLGMPFMI). Over 101-116 (HQLMGNGVWHFGETMC) the chain is Extracellular. A disulfide bridge links cysteine 116 with cysteine 194. Residues 117–139 (TLITAMDANSQFTSTYILTAMTI) form a helical membrane-spanning segment. At 140–161 (DRYLATVHPISSTKFRKPSMAT) the chain is on the cytoplasmic side. The chain crosses the membrane as a helical span at residues 162–182 (LVICLLWALSFISITPVWLYA). The Extracellular portion of the chain corresponds to 183-204 (RLIPFPGGAVGCGIRLPNPDTD). The chain crosses the membrane as a helical span at residues 205–225 (LYWFTLYQFFLAFALPFVVIT). Residues 226 to 256 (AAYVKILQRMTSSVAPASQRSIRLRTKRVTR) lie on the Cytoplasmic side of the membrane. A helical membrane pass occupies residues 257–277 (TAIAICLVFFVCWAPYYVLQL). Topologically, residues 278 to 294 (TQLSISRPTLTFVYLYN) are extracellular. A helical membrane pass occupies residues 295–315 (AAISLGYANSCLNPFVYIVLC). Residues 316–353 (ETFRKRLVLSVKPAAQGQLRTVSNAQTADEERTESKGT) are Cytoplasmic-facing.

The protein belongs to the G-protein coupled receptor 1 family. Interacts with NCDN. High level in the brain, moderate amounts in the eye and skeletal muscle, and small amounts in tongue and pituitary.

Its subcellular location is the cell membrane. Its function is as follows. Receptor for melanin-concentrating hormone, coupled to G proteins that inhibit adenylyl cyclase. The sequence is that of Melanin-concentrating hormone receptor 1 from Rattus norvegicus (Rat).